We begin with the raw amino-acid sequence, 26 residues long: Potassium channel toxin alpha-KTx6 OcyKTx1 (26 aa).

A disulfide bond links C3 and C24.

Belongs to the short scorpion toxin superfamily. Potassium channel inhibitor family. Alpha-KTx 06 subfamily. Expressed by the venom gland.

Its subcellular location is the secreted. Its function is as follows. Blocks voltage-gated potassium channels. This chain is Potassium channel toxin alpha-KTx6 OcyKTx1, found in Opisthacanthus cayaporum (South American scorpion).